The primary structure comprises 310 residues: Methionyl-tRNA formyltransferase (310 aa).

109–112 (SLLP) contributes to the (6S)-5,6,7,8-tetrahydrofolate binding site.

This sequence belongs to the Fmt family.

It catalyses the reaction L-methionyl-tRNA(fMet) + (6R)-10-formyltetrahydrofolate = N-formyl-L-methionyl-tRNA(fMet) + (6S)-5,6,7,8-tetrahydrofolate + H(+). In terms of biological role, attaches a formyl group to the free amino group of methionyl-tRNA(fMet). The formyl group appears to play a dual role in the initiator identity of N-formylmethionyl-tRNA by promoting its recognition by IF2 and preventing the misappropriation of this tRNA by the elongation apparatus. The polypeptide is Methionyl-tRNA formyltransferase (Staphylococcus epidermidis (strain ATCC 35984 / DSM 28319 / BCRC 17069 / CCUG 31568 / BM 3577 / RP62A)).